The chain runs to 169 residues: X polypeptide (169 aa).

It belongs to the IagB/IpgF/P19 family.

The polypeptide is X polypeptide (yubQ) (Escherichia coli (strain K12)).